The following is a 278-amino-acid chain: uncharacterized protein (278 aa).

It localises to the cytoplasm. It is found in the nucleus. Its function is as follows. Probable methyltransferase. This is an uncharacterized protein from Schizosaccharomyces pombe (strain 972 / ATCC 24843) (Fission yeast).